The following is a 105-amino-acid chain: Dynein axonemal light chain 4 (105 aa).

Belongs to the dynein light chain family. In terms of assembly, consists of at least two heavy chains and a number of intermediate and light chains.

Its subcellular location is the cytoplasm. The protein localises to the cytoskeleton. It localises to the cilium axoneme. Force generating protein of respiratory cilia. Produces force towards the minus ends of microtubules. Dynein has ATPase activity. This chain is Dynein axonemal light chain 4 (DNAL4), found in Bos taurus (Bovine).